Here is a 93-residue protein sequence, read N- to C-terminus: Small ribosomal subunit protein uS19 (93 aa).

Belongs to the universal ribosomal protein uS19 family.

Functionally, protein S19 forms a complex with S13 that binds strongly to the 16S ribosomal RNA. The sequence is that of Small ribosomal subunit protein uS19 from Alkaliphilus oremlandii (strain OhILAs) (Clostridium oremlandii (strain OhILAs)).